A 736-amino-acid polypeptide reads, in one-letter code: Meiotic expression up-regulated protein 27 (736 aa).

The protein belongs to the UPF0300 family.

The protein is Meiotic expression up-regulated protein 27 (meu27) of Schizosaccharomyces pombe (strain 972 / ATCC 24843) (Fission yeast).